A 191-amino-acid chain; its full sequence is Small ribosomal subunit protein eS7z (191 aa).

The residue at position 1 (Met1) is an N-acetylmethionine. Positions 15-50 (ELSELDEQVAQAFFDLENTNQELKSELKDLYVNSAV) form a coiled coil.

Belongs to the eukaryotic ribosomal protein eS7 family.

This is Small ribosomal subunit protein eS7z (RPS7A) from Arabidopsis thaliana (Mouse-ear cress).